Reading from the N-terminus, the 269-residue chain is MKKKFSLIAMAGAALLLLTACGTTAVTSSSTNLWDQIVYGFAQVIRFLSFGGLTGVGIILFTIVIRAALLPLMNIQIKSSQRMQEIQPEIKKIQAKYPSKDMESRRLMNEEIQKLYAENKVNPYMGCLPLVVQMPVLWALYQALSRVDFLKHGTFLWFEIGAKDPTFILPILAAVFTFLSSYLMMKSAPERNAMTTSMTYIMPIFILIMGVNFAAGIALYWVISNAFQVFQTMLLANPYKIIAAREAKVQVEKDKIKAREKALKKARKK.

The signal sequence occupies residues 1 to 20; the sequence is MKKKFSLIAMAGAALLLLTA. Cysteine 21 carries N-palmitoyl cysteine lipidation. Cysteine 21 carries the S-diacylglycerol cysteine lipid modification. The next 4 membrane-spanning stretches (helical) occupy residues 45–65, 124–144, 165–185, and 203–223; these read IRFLSFGGLTGVGIILFTIVI, YMGCLPLVVQMPVLWALYQAL, PTFILPILAAVFTFLSSYLMM, and PIFILIMGVNFAAGIALYWVI.

Belongs to the OXA1/ALB3/YidC family. Type 2 subfamily.

The protein resides in the cell membrane. Its function is as follows. Required for the insertion and/or proper folding and/or complex formation of integral membrane proteins into the membrane. Involved in integration of membrane proteins that insert both dependently and independently of the Sec translocase complex, as well as at least some lipoproteins. In Lactococcus lactis subsp. lactis (strain IL1403) (Streptococcus lactis), this protein is Membrane protein insertase YidC 1.